Reading from the N-terminus, the 338-residue chain is Lipoate-protein ligase A (338 aa).

One can recognise a BPL/LPL catalytic domain in the interval 29 to 216; sequence PATQRVLFLW…AFFAHYGERV (188 aa). Residues R71, 76-79, and K134 each bind ATP; that span reads GAVF. K134 provides a ligand contact to (R)-lipoate.

This sequence belongs to the LplA family. In terms of assembly, monomer.

Its subcellular location is the cytoplasm. It catalyses the reaction L-lysyl-[lipoyl-carrier protein] + (R)-lipoate + ATP = N(6)-[(R)-lipoyl]-L-lysyl-[lipoyl-carrier protein] + AMP + diphosphate + H(+). Its pathway is protein modification; protein lipoylation via exogenous pathway; protein N(6)-(lipoyl)lysine from lipoate: step 1/2. The protein operates within protein modification; protein lipoylation via exogenous pathway; protein N(6)-(lipoyl)lysine from lipoate: step 2/2. Functionally, catalyzes both the ATP-dependent activation of exogenously supplied lipoate to lipoyl-AMP and the transfer of the activated lipoyl onto the lipoyl domains of lipoate-dependent enzymes. The polypeptide is Lipoate-protein ligase A (Escherichia coli O6:H1 (strain CFT073 / ATCC 700928 / UPEC)).